Here is a 1295-residue protein sequence, read N- to C-terminus: DNA-directed RNA polymerase subunit beta' (1295 aa).

Zn(2+) contacts are provided by Cys-66, Cys-68, Cys-81, and Cys-84. The Mg(2+) site is built by Asp-562, Asp-564, and Asp-566. Zn(2+)-binding residues include Cys-901, Cys-975, Cys-982, and Cys-985.

This sequence belongs to the RNA polymerase beta' chain family. As to quaternary structure, the RNAP catalytic core consists of 2 alpha, 1 beta, 1 beta' and 1 omega subunit. When a sigma factor is associated with the core the holoenzyme is formed, which can initiate transcription. Mg(2+) is required as a cofactor. Requires Zn(2+) as cofactor.

The enzyme catalyses RNA(n) + a ribonucleoside 5'-triphosphate = RNA(n+1) + diphosphate. Functionally, DNA-dependent RNA polymerase catalyzes the transcription of DNA into RNA using the four ribonucleoside triphosphates as substrates. The protein is DNA-directed RNA polymerase subunit beta' of Rubrobacter xylanophilus (strain DSM 9941 / JCM 11954 / NBRC 16129 / PRD-1).